The chain runs to 214 residues: Ribosomal protein uL16-like (214 aa).

It belongs to the universal ribosomal protein uL16 family. In terms of assembly, component of a male germ cell-specific 60S large ribosomal subunit (LSU), which contains RPL10L and RPL39L, instead of RPL10 and RPL39 paralogs. The composition of the rest of the complex is similar to classical ribosomes. As to expression, almost testis-specific. Also expressed in pre- and postmenopausal ovary.

Its subcellular location is the cytoplasm. Its function is as follows. Testis-specific component of the ribosome, which is required for the transition from prophase to metaphase in male meiosis I. Compensates for the inactivated X-linked RPL10 paralog during spermatogenesis. The ribosome is a large ribonucleoprotein complex responsible for the synthesis of proteins in the cell. The male germ cell-specific ribosome displays a ribosomal polypeptide exit tunnel of distinct size and charge states compared with the classical ribosome. It is responsible for regulating the biosynthesis and folding of a subset of male germ-cell-specific proteins that are essential for the formation of sperm. This chain is Ribosomal protein uL16-like, found in Homo sapiens (Human).